Consider the following 544-residue polypeptide: Serine/threonine-protein kinase PAK 1 (544 aa).

Residues 1-77 (MSNNGLDIQD…KEKERPEISL (77 aa)) form a disordered region. N-acetylserine is present on Ser2. The residue at position 21 (Ser21) is a Phosphoserine; by PKB and autocatalysis. Residues 68-77 (KEKERPEISL) show a composition bias toward basic and acidic residues. Positions 70–140 (KERPEISLPS…YNSKKTSNSQ (71 aa)) are autoregulatory region. Residues 75-88 (ISLPSDFEHTIHVG) enclose the CRIB domain. The tract at residues 75–105 (ISLPSDFEHTIHVGFDAVTGEFTGMPEQWAR) is GTPase-binding. The residue at position 84 (Thr84) is a Phosphothreonine; by OXSR1. Phosphoserine is present on Ser115. 2 positions are modified to phosphotyrosine: Tyr131 and Tyr142. Residues Ser144 and Ser149 each carry the phosphoserine; by autocatalysis modification. The residue at position 153 (Tyr153) is a Phosphotyrosine; by JAK2. The segment at 161 to 193 (VKAVSETPAVPPVSEDEDDDDDGTPPPVIAPRP) is disordered. Ser174 carries the post-translational modification Phosphoserine. The segment covering 174–183 (SEDEDDDDDG) has biased composition (acidic residues). Position 184 is a phosphothreonine (Thr184). Position 198 is a phosphoserine; by autocatalysis (Ser198). Tyr200 is subject to Phosphotyrosine; by JAK2. Phosphoserine; by autocatalysis is present on Ser203. Phosphothreonine occurs at positions 211 and 218. The interval 212 to 250 (PTRDVATSPISPTENNTTPPDALTRNTEKQKKKPKMSDE) is disordered. Residues Ser219 and Ser222 each carry the phosphoserine modification. Residues 219–230 (SPISPTENNTTP) show a composition bias toward polar residues. Thr224, Thr228, and Thr229 each carry phosphothreonine. One can recognise a Protein kinase domain in the interval 269-520 (YTRFEKIGQG…AKELLQHQFL (252 aa)). Residue 275–283 (IGQGASGTV) coordinates ATP. The residue at position 284 (Tyr284) is a Phosphotyrosine; by JAK2. Lys298 lines the ATP pocket. The active-site Proton acceptor is the Asp388. Thr422 is subject to Phosphothreonine; by autocatalysis, BRSK2 and PDPK1.

It belongs to the protein kinase superfamily. STE Ser/Thr protein kinase family. STE20 subfamily. As to quaternary structure, homodimer in its autoinhibited state. Active as monomer. Interacts with GIT1. Component of cytoplasmic complexes, which also contains PXN, ARHGEF7 and GIT1. Interacts with NISCH. Interacts with DVL1; mediates the formation of a DVL1, MUSK and PAK1 ternary complex involved in AChR clustering. Binds to the caspase-cleaved p110 isoform of CDC2L1 and CDC2L2, p110C, but not the full-length proteins. Interacts with ARHGEF7. Interacts tightly with GTP-bound but not GDP-bound CDC42/P21 and RAC1. Probably found in a ternary complex composed of DSCAM, PAK1 and RAC1. Interacts with DSCAM (via cytoplasmic domain); the interaction is direct and enhanced in presence of RAC1. Interacts with SCRIB. Interacts with PDPK1. Interacts (via kinase domain) with RAF1. Interacts with NCK1 and NCK2. Interacts with TBCB. Interacts with BRSK2. Interacts with SNAI1. Interacts with CIB1 (via N-terminal region); the interaction is direct, promotes PAK1 activity and occurs in a calcium-dependent manner. Interacts with INPP5K. Interacts with gamma-tubulin. Interacts with RHOU; the interaction promotes PAK1 activation. The cofactor is Mg(2+). Autophosphorylated in trans, meaning that in a dimer, one kinase molecule phosphorylates the other one. Activated by autophosphorylation at Thr-422 in response to a conformation change, triggered by interaction with GTP-bound CDC42 or RAC1. Activated by phosphorylation at Thr-422 by BRSK2 and by PDPK1. Phosphorylated by JAK2 in response to PRL; this increases PAK1 kinase activity. Phosphorylated at Ser-21 by PKB/AKT; this reduces interaction with NCK1 and association with focal adhesion sites. Upon DNA damage, phosphorylated at Thr-211 and translocates to the nucleoplasm. Phosphorylated at tyrosine residues, which can be enhanced by NTN1.

Its subcellular location is the cytoplasm. The protein resides in the cell junction. It localises to the focal adhesion. The protein localises to the cell projection. It is found in the lamellipodium. Its subcellular location is the cell membrane. The protein resides in the ruffle membrane. It localises to the invadopodium. The protein localises to the nucleus. It is found in the nucleoplasm. Its subcellular location is the chromosome. The protein resides in the cytoskeleton. It localises to the microtubule organizing center. The protein localises to the centrosome. The enzyme catalyses L-seryl-[protein] + ATP = O-phospho-L-seryl-[protein] + ADP + H(+). It catalyses the reaction L-threonyl-[protein] + ATP = O-phospho-L-threonyl-[protein] + ADP + H(+). Its activity is regulated as follows. Phosphorylation of Thr-84 by OXSR1 inhibits activation. Activated by binding small G proteins. Binding of GTP-bound CDC42 or RAC1 to the autoregulatory region releases monomers from the autoinhibited dimer, and enables activation by phosphorylation of Thr-422. Its function is as follows. Protein kinase involved in intracellular signaling pathways downstream of integrins and receptor-type kinases that plays an important role in cytoskeleton dynamics, in cell adhesion, migration, proliferation, apoptosis, mitosis, and in vesicle-mediated transport processes. Can directly phosphorylate BAD and protects cells against apoptosis. Activated by interaction with CDC42 and RAC1. Functions as a GTPase effector that links the Rho-related GTPases CDC42 and RAC1 to the JNK MAP kinase pathway. Phosphorylates and activates MAP2K1, and thereby mediates activation of downstream MAP kinases. Involved in the reorganization of the actin cytoskeleton, actin stress fibers and of focal adhesion complexes. Phosphorylates the tubulin chaperone TBCB and thereby plays a role in the regulation of microtubule biogenesis and organization of the tubulin cytoskeleton. Plays a role in the regulation of insulin secretion in response to elevated glucose levels. Part of a ternary complex that contains PAK1, DVL1 and MUSK that is important for MUSK-dependent regulation of AChR clustering during the formation of the neuromuscular junction (NMJ). Activity is inhibited in cells undergoing apoptosis, potentially due to binding of CDC2L1 and CDC2L2. Phosphorylates MYL9/MLC2. Phosphorylates RAF1 at 'Ser-338' and 'Ser-339' resulting in: activation of RAF1, stimulation of RAF1 translocation to mitochondria, phosphorylation of BAD by RAF1, and RAF1 binding to BCL2. Phosphorylates SNAI1 at 'Ser-246' promoting its transcriptional repressor activity by increasing its accumulation in the nucleus. In podocytes, promotes NR3C2 nuclear localization. Required for atypical chemokine receptor ACKR2-induced phosphorylation of LIMK1 and cofilin (CFL1) and for the up-regulation of ACKR2 from endosomal compartment to cell membrane, increasing its efficiency in chemokine uptake and degradation. In synapses, seems to mediate the regulation of F-actin cluster formation performed by SHANK3, maybe through CFL1 phosphorylation and inactivation. Plays a role in RUFY3-mediated facilitating gastric cancer cells migration and invasion. In response to DNA damage, phosphorylates MORC2 which activates its ATPase activity and facilitates chromatin remodeling. In neurons, plays a crucial role in regulating GABA(A) receptor synaptic stability and hence GABAergic inhibitory synaptic transmission through its role in F-actin stabilization. In hippocampal neurons, necessary for the formation of dendritic spines and excitatory synapses; this function is dependent on kinase activity and may be exerted by the regulation of actomyosin contractility through the phosphorylation of myosin II regulatory light chain (MLC). Along with GIT1, positively regulates microtubule nucleation during interphase. Phosphorylates FXR1, promoting its localization to stress granules and activity. Phosphorylates ILK on 'Thr-173' and 'Ser-246', promoting nuclear export of ILK. The polypeptide is Serine/threonine-protein kinase PAK 1 (Bos taurus (Bovine)).